A 379-amino-acid chain; its full sequence is dTDP-3-amino-3,4,6-trideoxy-alpha-D-glucose transaminase (379 aa).

Pyridoxal 5'-phosphate is bound by residues Gly-67, Gln-167, 188-193, Tyr-221, Tyr-227, 235-237, and Tyr-318; these read SFYPGK and NSR. Lys-193 is modified (N6-(pyridoxal phosphate)lysine).

Belongs to the degT/dnrJ/eryC1 family. Homodimer. It depends on pyridoxal 5'-phosphate as a cofactor.

It carries out the reaction dTDP-3-amino-3,4,6-trideoxy-alpha-D-glucose + 2-oxoglutarate = dTDP-3-dehydro-4,6-dideoxy-alpha-D-glucose + L-glutamate. It participates in antibiotic biosynthesis. In terms of biological role, involved in the biosynthesis of dTDP-alpha-D-desosamine, a sugar found in several bacterial macrolide antibiotics. Catalyzes the reversible transfer of the amino group from L-glutamate to the C-3 position of dTDP-3-keto-4,6-deoxyglucose to yield dTDP-3-amino-3,4,6-trideoxyglucose. This is dTDP-3-amino-3,4,6-trideoxy-alpha-D-glucose transaminase from Streptomyces venezuelae.